Here is a 114-residue protein sequence, read N- to C-terminus: Iron-sulfur cluster insertion protein ErpA (114 aa).

The iron-sulfur cluster site is built by cysteine 42, cysteine 106, and cysteine 108.

This sequence belongs to the HesB/IscA family. Homodimer. Requires iron-sulfur cluster as cofactor.

Its function is as follows. Required for insertion of 4Fe-4S clusters for at least IspG. The sequence is that of Iron-sulfur cluster insertion protein ErpA from Serratia proteamaculans (strain 568).